Here is a 338-residue protein sequence, read N- to C-terminus: MLDDRARLLLKALVERYIADGQPVGSRTLSRASGLELSPATIRNVMSDLEELGLIVSPHTSAGRIPTARGYRLFVDTMLTTQRDQLSAGHITAPRLAPDQPQKVISNAAHMLSSLSQFVGVVMAPRRTSVFRHIEFLRLSEKRFLVIIVSPDGDVQNRVIFTEADYTQSQLIEASNFLNSHYAGMAIEEVRERLQNEVEALRGEIATLMQAAVQVSSEAIESRDEVVVSGERNLLAVSDFSSDMGNLRKLFDLFEQKAQLMRLLDVSSRAEGVRIYIGGESQVIPYQELSVVTAPYEVDGQVVGTLGVIGPMRMPYEKMIQIVDITSKLVSTALSHSK.

Belongs to the HrcA family.

Its function is as follows. Negative regulator of class I heat shock genes (grpE-dnaK-dnaJ and groELS operons). Prevents heat-shock induction of these operons. In Polaromonas sp. (strain JS666 / ATCC BAA-500), this protein is Heat-inducible transcription repressor HrcA.